A 340-amino-acid polypeptide reads, in one-letter code: Pilin (340 aa).

The N-terminal stretch at 1-23 is a signal peptide; it reads MKLRHLLLTGAALTSFAATTVHG. 2 consecutive cross-links (isoaspartyl lysine isopeptide (Lys-Asn)) follow at residues 36–168 and 179–303; these read KNLD…QFKN and KKVS…TFTN. Lys161 is covalently cross-linked (Threonyl lysine isopeptide (Lys-Thr) (interchain with T-311)). The EVPTG sorting signal motif lies at 308–312; sequence EVPTG. Residue Thr311 is modified to Pentaglycyl murein peptidoglycan amidated threonine; alternate. Thr311 is covalently cross-linked (Threonyl lysine isopeptide (Thr-Lys) (interchain with K-161); alternate). Residues 312–340 constitute a propeptide, removed by sortase C1; sequence GVAMTVAPYIALGIVAVGGALYFVKKKNA.

It belongs to the Streptococcus pilin family. In terms of assembly, forms columns of about 3-nanometers in diameter of head-to-tail-assembled molecules. In terms of processing, proteolytically processed and assembled in pili through a transpeptidation reaction catalyzed by the sortase C1. The last pilin subunit is cross-linked to the peptidoglycan.

The protein localises to the secreted. Its subcellular location is the cell wall. It is found in the fimbrium. Its function is as follows. Major component of the pilus. A stack of the pilin subunits, joined by intermolecular isopeptide bonds, forms the pilus. The pilus is required for bacterial adhesion to host cells, for bacterial aggregation, and for biofilm formation. In Streptococcus pyogenes serotype M1, this protein is Pilin.